Reading from the N-terminus, the 532-residue chain is Probable galacturonosyltransferase 14 (532 aa).

Residues 1 to 40 (MQLHISPSMRSITISSSNEFIDLMKIKVAARHISYRTLFH) are Cytoplasmic-facing. Residues 41–61 (TILILAFLLPFVFILTAVVTL) form a helical; Signal-anchor for type II membrane protein membrane-spanning segment. The Lumenal segment spans residues 62–532 (EGVNKCSSID…DFIKNCHILE (471 aa)). Residues asparagine 305, asparagine 395, asparagine 444, and asparagine 519 are each glycosylated (N-linked (GlcNAc...) asparagine).

It belongs to the glycosyltransferase 8 family. In terms of tissue distribution, expressed in roots, inflorescences, siliques, leaves and stems. Accumulates in pollen grains.

It localises to the golgi apparatus membrane. It participates in glycan metabolism; pectin biosynthesis. In terms of biological role, may be involved in pectin and/or xylans biosynthesis in cell walls. Together with GAUT13, required for pollen tube growth, possibly through the regulation of pectin biosynthesis and repartition in the pollen tube wall. In Arabidopsis thaliana (Mouse-ear cress), this protein is Probable galacturonosyltransferase 14.